Reading from the N-terminus, the 410-residue chain is UDP-N-acetylglucosamine--N-acetylmuramyl-(pentapeptide) pyrophosphoryl-undecaprenol N-acetylglucosamine transferase (410 aa).

A disordered region spans residues Met-1–Ser-35. A compositionally biased stretch (low complexity) spans Ala-14 to Ser-35. UDP-N-acetyl-alpha-D-glucosamine contacts are provided by residues Thr-45–Gly-47, Asn-167, Arg-204, Ser-238, and Gln-334.

This sequence belongs to the glycosyltransferase 28 family. MurG subfamily.

The protein resides in the cell membrane. It carries out the reaction di-trans,octa-cis-undecaprenyl diphospho-N-acetyl-alpha-D-muramoyl-L-alanyl-D-glutamyl-meso-2,6-diaminopimeloyl-D-alanyl-D-alanine + UDP-N-acetyl-alpha-D-glucosamine = di-trans,octa-cis-undecaprenyl diphospho-[N-acetyl-alpha-D-glucosaminyl-(1-&gt;4)]-N-acetyl-alpha-D-muramoyl-L-alanyl-D-glutamyl-meso-2,6-diaminopimeloyl-D-alanyl-D-alanine + UDP + H(+). The protein operates within cell wall biogenesis; peptidoglycan biosynthesis. In terms of biological role, cell wall formation. Catalyzes the transfer of a GlcNAc subunit on undecaprenyl-pyrophosphoryl-MurNAc-pentapeptide (lipid intermediate I) to form undecaprenyl-pyrophosphoryl-MurNAc-(pentapeptide)GlcNAc (lipid intermediate II). This Mycobacterium tuberculosis (strain ATCC 25177 / H37Ra) protein is UDP-N-acetylglucosamine--N-acetylmuramyl-(pentapeptide) pyrophosphoryl-undecaprenol N-acetylglucosamine transferase.